The primary structure comprises 121 residues: Splicing factor 3B subunit 6 (121 aa).

Residues 12–25 (EVNRLLYVRNLPYK) form an interaction with pre-mRNA branch site region. Residues 15-90 (RLLYVRNLPY…RYLVVLYYQS (76 aa)) enclose the RRM domain.

It belongs to the SF3B6 family. As to quaternary structure, component of splicing factor SF3B complex. Component of the U11/U12 snRNPs that are part of the U12-type spliceosome.

Its subcellular location is the nucleus. Involved in pre-mRNA splicing as a component of the splicing factor SF3B complex. SF3B complex is required for 'A' complex assembly formed by the stable binding of U2 snRNP to the branchpoint sequence (BPS) in pre-mRNA. Directly contacts the pre-mRNA branch site adenosine for the first catalytic step of splicing. Enters the spliceosome and associates with the pre-mRNA branch site as part of the 17S U2 or, in the case of the minor spliceosome, as part of the 18S U11/U12 snRNP complex, and thus may facilitate the interaction of these snRNP with the branch sites of U2 and U12 respectively. The protein is Splicing factor 3B subunit 6 of Drosophila melanogaster (Fruit fly).